The chain runs to 163 residues: Transcriptional repressor NrdR (163 aa).

A zinc finger lies at 3-34 (CPFCRHPDSRVVDSRVSDDGSSIRRRRQCPQC). One can recognise an ATP-cone domain in the interval 46–136 (LTVIKRSGIG…VYQAFESLDD (91 aa)).

It belongs to the NrdR family. Zn(2+) serves as cofactor.

Negatively regulates transcription of bacterial ribonucleotide reductase nrd genes and operons by binding to NrdR-boxes. This chain is Transcriptional repressor NrdR, found in Renibacterium salmoninarum (strain ATCC 33209 / DSM 20767 / JCM 11484 / NBRC 15589 / NCIMB 2235).